A 260-amino-acid chain; its full sequence is DNA repair protein RecO (260 aa).

This sequence belongs to the RecO family.

Functionally, involved in DNA repair and RecF pathway recombination. This Ligilactobacillus salivarius (strain UCC118) (Lactobacillus salivarius) protein is DNA repair protein RecO.